The chain runs to 691 residues: Calcium-binding and coiled-coil domain-containing protein 1 (691 aa).

The interval 1–30 (MEESPLSRAPSRGGVNFLNVARTYIPNTKV) is p300 KIX-binding. The segment at 1-190 (MEESPLSRAP…VQELERALAT (190 aa)) is N-terminal AD (CTNNB1 binding site). Residue serine 4 is modified to Phosphoserine. The interval 45 to 125 (SDWIGIFKVE…FQFREPRPMD (81 aa)) is interaction with GATA1. 3 coiled-coil regions span residues 145 to 205 (KATV…YKGI), 232 to 339 (ELED…AELE), and 417 to 514 (QSVE…ADEK). The tract at residues 501–691 (RKLEARLEKV…FSTQDPFTFE (191 aa)) is C-terminal AD (CTNNB1 binding site); interaction with CCAR1. The segment at 513–604 (EKWNEDATTE…SDSEAEDEKS (92 aa)) is disordered. Residues 653 to 679 (WKECPICKERFPAESDKDALEDHMDGH) form a UBZ1-type zinc finger. Cysteine 656, cysteine 659, histidine 675, and histidine 679 together coordinate Zn(2+).

It belongs to the CALCOCO family. As to quaternary structure, part of a calphoglin complex consisting of CALCOCO1, PPA1 and PGM. Interacts with the bHLH-PAS domains of GRIP1, AHR and ARNT. Interacts with CTNNB1 via both its N- and C-terminal regions. Interacts with EP300. Interacts with CCAR1 (via N-terminus) and GATA1.

The protein localises to the cytoplasm. It is found in the nucleus. Functions as a coactivator for aryl hydrocarbon and nuclear receptors (NR). Recruited to promoters through its contact with the N-terminal basic helix-loop-helix-Per-Arnt-Sim (PAS) domain of transcription factors or coactivators, such as NCOA2. During ER-activation acts synergistically in combination with other NCOA2-binding proteins, such as EP300, CREBBP and CARM1. Involved in the transcriptional activation of target genes in the Wnt/CTNNB1 pathway. Functions as a secondary coactivator in LEF1-mediated transcriptional activation via its interaction with CTNNB1. Coactivator function for nuclear receptors and LEF1/CTNNB1 involves differential utilization of two different activation regions. In association with CCAR1 enhances GATA1- and MED1-mediated transcriptional activation from the gamma-globin promoter during erythroid differentiation of K562 erythroleukemia cells. Functionally, seems to enhance inorganic pyrophosphatase thus activating phosphogluomutase (PMG). Probably functions as a component of the calphoglin complex, which is involved in linking cellular metabolism (phosphate and glucose metabolism) with other core functions including protein synthesis and degradation, calcium signaling and cell growth. The polypeptide is Calcium-binding and coiled-coil domain-containing protein 1 (CALCOCO1) (Pongo abelii (Sumatran orangutan)).